The primary structure comprises 169 residues: Putative phosphoesterase SSP1770 (169 aa).

His34 functions as the Proton donor in the catalytic mechanism. 2 short sequence motifs (HXTX) span residues 34-37 (HITI) and 115-118 (HFTI). Catalysis depends on His115, which acts as the Proton acceptor.

This sequence belongs to the 2H phosphoesterase superfamily. YjcG family.

The sequence is that of Putative phosphoesterase SSP1770 from Staphylococcus saprophyticus subsp. saprophyticus (strain ATCC 15305 / DSM 20229 / NCIMB 8711 / NCTC 7292 / S-41).